Reading from the N-terminus, the 348-residue chain is Holliday junction branch migration complex subunit RuvB (348 aa).

The segment at 4–184 is large ATPase domain (RuvB-L); it reads ADRLIAASGR…FGIVQRLEFY (181 aa). Residues Ile-23, Arg-24, Gly-65, Lys-68, Thr-69, Thr-70, 131-133, Arg-174, Tyr-184, and Arg-221 contribute to the ATP site; that span reads EDF. Thr-69 serves as a coordination point for Mg(2+). Residues 185–255 are small ATPAse domain (RuvB-S); it reads SDKDLATIVS…VADMALNLLD (71 aa). Residues 258–348 form a head domain (RuvB-H) region; sequence ERGFDHSDRR…GGDFSEPGDE (91 aa). Residues Arg-294, Arg-313, and Arg-318 each contribute to the DNA site.

The protein belongs to the RuvB family. Homohexamer. Forms an RuvA(8)-RuvB(12)-Holliday junction (HJ) complex. HJ DNA is sandwiched between 2 RuvA tetramers; dsDNA enters through RuvA and exits via RuvB. An RuvB hexamer assembles on each DNA strand where it exits the tetramer. Each RuvB hexamer is contacted by two RuvA subunits (via domain III) on 2 adjacent RuvB subunits; this complex drives branch migration. In the full resolvosome a probable DNA-RuvA(4)-RuvB(12)-RuvC(2) complex forms which resolves the HJ.

The protein localises to the cytoplasm. It catalyses the reaction ATP + H2O = ADP + phosphate + H(+). In terms of biological role, the RuvA-RuvB-RuvC complex processes Holliday junction (HJ) DNA during genetic recombination and DNA repair, while the RuvA-RuvB complex plays an important role in the rescue of blocked DNA replication forks via replication fork reversal (RFR). RuvA specifically binds to HJ cruciform DNA, conferring on it an open structure. The RuvB hexamer acts as an ATP-dependent pump, pulling dsDNA into and through the RuvAB complex. RuvB forms 2 homohexamers on either side of HJ DNA bound by 1 or 2 RuvA tetramers; 4 subunits per hexamer contact DNA at a time. Coordinated motions by a converter formed by DNA-disengaged RuvB subunits stimulates ATP hydrolysis and nucleotide exchange. Immobilization of the converter enables RuvB to convert the ATP-contained energy into a lever motion, pulling 2 nucleotides of DNA out of the RuvA tetramer per ATP hydrolyzed, thus driving DNA branch migration. The RuvB motors rotate together with the DNA substrate, which together with the progressing nucleotide cycle form the mechanistic basis for DNA recombination by continuous HJ branch migration. Branch migration allows RuvC to scan DNA until it finds its consensus sequence, where it cleaves and resolves cruciform DNA. The protein is Holliday junction branch migration complex subunit RuvB of Pseudomonas putida (strain GB-1).